Here is a 747-residue protein sequence, read N- to C-terminus: Kinesin-like protein KIF3B (747 aa).

M1 carries the post-translational modification N-acetylmethionine. The residue at position 2 (S2) is an N-acetylserine; in Kinesin-like protein KIF3B, N-terminally processed. In terms of domain architecture, Kinesin motor spans 9–340 (SVRVVVRCRP…LRYANRAKNI (332 aa)). An ATP-binding site is contributed by 96 to 103 (GQTGTGKT). The stretch at 346-579 (VNEDPKDALL…EQTQNELTRE (234 aa)) forms a coiled coil. Disordered stretches follow at residues 374 to 412 (IGRR…DKDD) and 699 to 747 (QVDA…LVPK). Acidic residues predominate over residues 393-411 (GEEEEEEGEEGEEEGDDKD). The globular stretch occupies residues 580-747 (LKLKHLIIEN…YPQSRGLVPK (168 aa)). The span at 701–710 (DASSFESTAN) shows a compositional bias: polar residues. The span at 711 to 721 (KKSKARPKSGR) shows a compositional bias: basic residues. Low complexity predominate over residues 722 to 735 (KSGSSSSSSGTPAS).

It belongs to the TRAFAC class myosin-kinesin ATPase superfamily. Kinesin family. Kinesin II subfamily. As to quaternary structure, heterodimer of KIF3A and KIF3B. KIF3A/KIF3B heterodimer interacts with KIFAP3 forming a heterotrimeric (KIF3A/KIF3B/KIFAP3) complex. Interacts directly with IFT20. Interacts with the SMC3 subunit of the cohesin complex. Interacts with FLCN.

It is found in the cytoplasm. Its subcellular location is the cytoskeleton. The protein resides in the cell projection. It localises to the cilium. The protein localises to the dendritic spine. Its function is as follows. Microtubule-based molecular motor that transport intracellular cargos, such as vesicles, organelles and protein complexes. Uses ATP hydrolysis to generate force to bind and move along the microtubule. Plays a role in cilia formation. Involved in photoreceptor integrity and opsin trafficking in rod photoreceptors. Transports vesicles containing N-methyl-D-aspartate (NMDA) receptor subunit GRIN2A into neuronal dendrites. This is Kinesin-like protein KIF3B (KIF3B) from Homo sapiens (Human).